Consider the following 878-residue polypeptide: DNA mismatch repair protein MutS (878 aa).

Gly-626 to Ser-633 lines the ATP pocket.

This sequence belongs to the DNA mismatch repair MutS family.

In terms of biological role, this protein is involved in the repair of mismatches in DNA. It is possible that it carries out the mismatch recognition step. This protein has a weak ATPase activity. The protein is DNA mismatch repair protein MutS of Paracoccus denitrificans (strain Pd 1222).